A 799-amino-acid polypeptide reads, in one-letter code: Ribonucleoside-diphosphate reductase large subunit (799 aa).

Substrate contacts are provided by residues Thr192, 207 to 208 (SC), Gly238, 408 to 412 (NLCAE), and 612 to 616 (PTAGT). A disulfide bridge links Cys208 with Cys424. The active-site Proton acceptor is the Asn408. The active-site Cysteine radical intermediate is the Cys410. The Proton acceptor role is filled by Glu412. The segment at 765-799 (PDSGDGVGGYKGGDEEPRSPEHAQCESPDRCLSCQ) is disordered. Basic and acidic residues predominate over residues 776–793 (GGDEEPRSPEHAQCESPD).

This sequence belongs to the ribonucleoside diphosphate reductase large chain family. In terms of assembly, heterotetramer composed of a homodimer of the large subunit (R1) and a homodimer of the small subunit (R2). Larger multisubunit protein complex are also active, composed of (R1)n(R2)n.

The enzyme catalyses a 2'-deoxyribonucleoside 5'-diphosphate + [thioredoxin]-disulfide + H2O = a ribonucleoside 5'-diphosphate + [thioredoxin]-dithiol. In terms of biological role, ribonucleoside-diphosphate reductase holoenzyme provides the precursors necessary for viral DNA synthesis. Allows virus growth in non-dividing cells, as well as reactivation from latency in infected hosts. Catalyzes the biosynthesis of deoxyribonucleotides from the corresponding ribonucleotides. The polypeptide is Ribonucleoside-diphosphate reductase large subunit (Equine herpesvirus 2 (strain 86/87) (EHV-2)).